The primary structure comprises 62 residues: Photosystem II reaction center protein Z (62 aa).

2 helical membrane-spanning segments follow: residues 8–28 (AVFA…VVFA) and 41–61 (FSGT…NSLI).

It belongs to the PsbZ family. As to quaternary structure, PSII is composed of 1 copy each of membrane proteins PsbA, PsbB, PsbC, PsbD, PsbE, PsbF, PsbH, PsbI, PsbJ, PsbK, PsbL, PsbM, PsbT, PsbY, PsbZ, Psb30/Ycf12, at least 3 peripheral proteins of the oxygen-evolving complex and a large number of cofactors. It forms dimeric complexes.

It localises to the plastid. Its subcellular location is the chloroplast thylakoid membrane. Functionally, may control the interaction of photosystem II (PSII) cores with the light-harvesting antenna, regulates electron flow through the 2 photosystem reaction centers. PSII is a light-driven water plastoquinone oxidoreductase, using light energy to abstract electrons from H(2)O, generating a proton gradient subsequently used for ATP formation. In Lotus japonicus (Lotus corniculatus var. japonicus), this protein is Photosystem II reaction center protein Z.